Here is a 313-residue protein sequence, read N- to C-terminus: Pyrimidine-specific ribonucleoside hydrolase RihB (313 aa).

Residue Asp-11 is the Proton acceptor of the active site. Residues Asp-11, Asp-16, and Val-124 each contribute to the Ca(2+) site. Substrate-binding residues include Gln-227 and His-239. Asp-240 contributes to the Ca(2+) binding site.

The protein belongs to the IUNH family. RihB subfamily. As to quaternary structure, homotetramer. The cofactor is Ca(2+).

The catalysed reaction is a pyrimidine ribonucleoside + H2O = a pyrimidine nucleobase + D-ribose. Hydrolyzes cytidine or uridine to ribose and cytosine or uracil, respectively. Has a clear preference for cytidine over uridine. Strictly specific for ribonucleosides. This is Pyrimidine-specific ribonucleoside hydrolase RihB from Escherichia coli O17:K52:H18 (strain UMN026 / ExPEC).